Here is a 267-residue protein sequence, read N- to C-terminus: Alpha-tubulin N-acetyltransferase (267 aa).

In terms of domain architecture, N-acetyltransferase spans 1–197; the sequence is MDFRAGLENV…NNFVVYSEFF (197 aa). Acetyl-CoA is bound by residues 131–144 and 167–176; these read FYIH…GYGK and SMKMIQFLHK.

The protein belongs to the acetyltransferase ATAT1 family.

It catalyses the reaction L-lysyl-[alpha-tubulin] + acetyl-CoA = N(6)-acetyl-L-lysyl-[alpha-tubulin] + CoA + H(+). Its function is as follows. Specifically acetylates 'Lys-40' in alpha-tubulin on the lumenal side of microtubules. Promotes microtubule destabilization and accelerates microtubule dynamics; this activity may be independent of acetylation activity. Acetylates alpha-tubulin with a slow enzymatic rate, due to a catalytic site that is not optimized for acetyl transfer. Enters the microtubule through each end and diffuses quickly throughout the lumen of microtubules. Acetylates only long/old microtubules because of its slow acetylation rate since it does not have time to act on dynamically unstable microtubules before the enzyme is released. This is Alpha-tubulin N-acetyltransferase from Schistosoma japonicum (Blood fluke).